The following is an 86-amino-acid chain: Large ribosomal subunit protein bL27 (86 aa).

The protein belongs to the bacterial ribosomal protein bL27 family.

This Xanthomonas oryzae pv. oryzae (strain PXO99A) protein is Large ribosomal subunit protein bL27.